The chain runs to 688 residues: Pentatricopeptide repeat-containing protein At3g18020 (688 aa).

17 PPR repeats span residues 53–88 (DRAYWRRRIHSICAVRRNPDEALRILDGLCLRGYRP), 89–123 (DSLNLSSVIHSLCDAGRFDEAHRRFLLFLASGFIP), 124–158 (DERTCNVIIARLLYSRSPVSTLGVIHRLIGFKKEF), 161–195 (SLTNYNRLMNQLCTIYRVIDAHKLVFDMRNRGHLP), 196–230 (DVVTFTTLIGGYCEIRELEVAHKVFDEMRVCGIRP), 231–261 (NSLTLSVLIGGFLKMRDVETGRKLMKELWEY), 271–305 (KAAAFANLVDSMCREGYFNDIFEIAENMSLCESVN), 306–340 (VEFAYGHMIDSLCRYRRNHGAARIVYIMKSKGLKP), 341–375 (RRTSYNAIIHGLCKDGGCMRAYQLLEEGSEFEFFP), 376–406 (SEYTYKLLMESLCKELDTGKARNVLELMLRK), 411–445 (RTRIYNIYLRGLCVMDNPTEILNVLVSMLQGDCRP), 446–480 (DEYTLNTVINGLCKMGRVDDAMKVLDDMMTGKFCA), 482–517 (DAVTLNTVMCGLLAQGRAEEALDVLNRVMPENKIKP), 518–552 (GVVAYNAVIRGLFKLHKGDEAMSVFGQLEKASVTA), 553–583 (DSTTYAIIIDGLCVTNKVDMAKKFWDDVIWP), 588–622 (DAFVYAAFLKGLCQSGYLSDACHFLYDLADSGAIP), and 623–657 (NVVCYNTVIAECSRSGLKREAYQILEEMRKNGQAP).

It belongs to the PPR family. P subfamily.

In Arabidopsis thaliana (Mouse-ear cress), this protein is Pentatricopeptide repeat-containing protein At3g18020.